Consider the following 441-residue polypeptide: uncharacterized protein (441 aa).

This sequence belongs to the outer membrane factor (OMF) (TC 1.B.17) family.

This is an uncharacterized protein from Haemophilus influenzae (strain ATCC 51907 / DSM 11121 / KW20 / Rd).